A 570-amino-acid polypeptide reads, in one-letter code: Phosphoenolpyruvate-protein phosphotransferase (570 aa).

The active-site Tele-phosphohistidine intermediate is the His189. Phosphoenolpyruvate-binding residues include Arg296 and Arg332. Positions 431 and 455 each coordinate Mg(2+). Phosphoenolpyruvate is bound by residues 454 to 455 and Arg465; that span reads ND. Cys502 (proton donor) is an active-site residue.

It belongs to the PEP-utilizing enzyme family. Homodimer. The cofactor is Mg(2+).

It localises to the cytoplasm. The enzyme catalyses L-histidyl-[protein] + phosphoenolpyruvate = N(pros)-phospho-L-histidyl-[protein] + pyruvate. In terms of biological role, general (non sugar-specific) component of the phosphoenolpyruvate-dependent sugar phosphotransferase system (sugar PTS). This major carbohydrate active-transport system catalyzes the phosphorylation of incoming sugar substrates concomitantly with their translocation across the cell membrane. Enzyme I transfers the phosphoryl group from phosphoenolpyruvate (PEP) to the phosphoryl carrier protein (HPr). This Buchnera aphidicola subsp. Schizaphis graminum (strain Sg) protein is Phosphoenolpyruvate-protein phosphotransferase (ptsI).